The primary structure comprises 455 residues: Beta-1,3-galactosyl-O-glycosyl-glycoprotein beta-1,6-N-acetylglucosaminyltransferase 4 (455 aa).

Residues 1–13 (MKIFRCCFKYTLQ) are Cytoplasmic-facing. The helical; Signal-anchor for type II membrane protein transmembrane segment at 14 to 34 (QKLFILLLTLWLFSLLKLLNV) threads the bilayer. Residues 35-455 (GRLLFPQRDI…TEGTRQSHTL (421 aa)) are Lumenal-facing. Asn73 carries an N-linked (GlcNAc...) asparagine glycan. Intrachain disulfides connect Cys74-Cys228, Cys162-Cys383, Cys183-Cys210, and Cys392-Cys424. Residues Asn287 and Asn382 are each glycosylated (N-linked (GlcNAc...) asparagine).

The protein belongs to the glycosyltransferase 14 family.

It localises to the golgi apparatus membrane. The enzyme catalyses a 3-O-[beta-D-galactosyl-(1-&gt;3)-N-acetyl-alpha-D-galactosaminyl]-L-seryl-[protein] + UDP-N-acetyl-alpha-D-glucosamine = 3-O-{beta-D-galactosyl-(1-&gt;3)-[N-acetyl-beta-D-glucosaminyl-(1-&gt;6)]-N-acetyl-alpha-D-galactosaminyl}-L-seryl-[protein] + UDP + H(+). It carries out the reaction a 3-O-[beta-D-galactosyl-(1-&gt;3)-N-acetyl-alpha-D-galactosaminyl]-L-threonyl-[protein] + UDP-N-acetyl-alpha-D-glucosamine = a 3-O-{beta-D-galactosyl-(1-&gt;3)-[N-acetyl-beta-D-glucosaminyl-(1-&gt;6)]-N-acetyl-alpha-D-galactosaminyl}-L-threonyl-[protein] + UDP + H(+). It participates in protein modification; protein glycosylation. Functionally, glycosyltransferase that mediates core 2 O-glycan branching, an important step in mucin-type biosynthesis. Does not have core 4 O-glycan or I-branching enzyme activity. The polypeptide is Beta-1,3-galactosyl-O-glycosyl-glycoprotein beta-1,6-N-acetylglucosaminyltransferase 4 (Gcnt4) (Mus musculus (Mouse)).